Here is a 359-residue protein sequence, read N- to C-terminus: MITVNVDLGERAYPIHIGADLIGRTELFAPHIAGASVTIVTNTTVEPLYGDTLRAALAPLGKRVSTVVLPDGEAYKNWETLNLIFDGLLEQHADRKTTLIALGGGVIGDMTGFAAACYMRGVPFIQVPTTLLSQVDSSVGGKTGINHPLGKNMIGAFYQPQAVIADIGALSTLPDRELAAGVAEIVKTGAIADAAFFDWIEANVGALTRRDPDALAHAVKRSCEIKAGVVAADEREGGLRAILNFGHTFGHAIEAGLGYGEWLHGEAVGCGMVMAADLSVRTGHLDEASRARLCRVVEAAHLPTRAPDLGDARYVELMRVDKKAEAGAIKFILLKRFGETIITPAPDDAVLATLAATTR.

Residues 71–76 (DGEAYK), 105–109 (GVIGD), 129–130 (TT), lysine 142, and lysine 151 each bind NAD(+). Residues glutamate 184, histidine 247, and histidine 264 each contribute to the Zn(2+) site.

This sequence belongs to the sugar phosphate cyclases superfamily. Dehydroquinate synthase family. The cofactor is Co(2+). It depends on Zn(2+) as a cofactor. NAD(+) is required as a cofactor.

It is found in the cytoplasm. It carries out the reaction 7-phospho-2-dehydro-3-deoxy-D-arabino-heptonate = 3-dehydroquinate + phosphate. The protein operates within metabolic intermediate biosynthesis; chorismate biosynthesis; chorismate from D-erythrose 4-phosphate and phosphoenolpyruvate: step 2/7. Its function is as follows. Catalyzes the conversion of 3-deoxy-D-arabino-heptulosonate 7-phosphate (DAHP) to dehydroquinate (DHQ). The chain is 3-dehydroquinate synthase from Burkholderia mallei (strain NCTC 10247).